We begin with the raw amino-acid sequence, 364 residues long: Lysophosphatidic acid receptor 1 (364 aa).

Residues 1-50 lie on the Extracellular side of the membrane; the sequence is MAAISTSIPVISQPQFTAMNEPQCFYNESIAFFYNRSGKHLATEWNTVSK. Intrachain disulfides connect cysteine 24-cysteine 190 and cysteine 188-cysteine 195. 2 N-linked (GlcNAc...) asparagine glycosylation sites follow: asparagine 27 and asparagine 35. Lysine 39 serves as a coordination point for a 1-acyl-sn-glycero-3-phosphate. The chain crosses the membrane as a helical span at residues 51–75; sequence LVMGLGITVCIFIMLANLLVMVAIY. The Cytoplasmic portion of the chain corresponds to 76–83; the sequence is VNRRFHFP. The helical transmembrane segment at 84–107 threads the bilayer; the sequence is IYYLMANLAAADFFAGLAYFYLMF. At 108–121 the chain is on the extracellular side; it reads NTGPNTRRLTVSTW. Residues 122-144 form a helical membrane-spanning segment; that stretch reads LLRQGLIDTSLTASVANLLAIAI. 124–129 contacts a 1-acyl-sn-glycero-3-phosphate; sequence RQGLID. The Cytoplasmic segment spans residues 145 to 163; that stretch reads ERHITVFRMQLHTRMSNRR. Residues 164–184 form a helical membrane-spanning segment; it reads VVVVIVVIWTMAIVMGAIPSV. At 185-204 the chain is on the extracellular side; it reads GWNCICDIENCSNMAPLYSD. The chain crosses the membrane as a helical span at residues 205–225; sequence SYLVFWAIFNLVTFVVMVVLY. Position 210 (tryptophan 210) interacts with a 1-acyl-sn-glycero-3-phosphate. Topologically, residues 226–255 are cytoplasmic; that stretch reads AHIFGYVRQRTMRMSRHSSGPRRNRDTMMS. Residues 256-280 traverse the membrane as a helical segment; it reads LLKTVVIVLGAFIICWTPGLVLLLL. Residues 281 to 294 lie on the Extracellular side of the membrane; it reads DVCCPQCDVLAYEK. The cysteines at positions 284 and 287 are disulfide-linked. The helical transmembrane segment at 295–315 threads the bilayer; that stretch reads FFLLLAEFNSAMNPIIYSYRD. The Cytoplasmic segment spans residues 316–364; it reads KEMSATFRQILCCQRSENPTGPTEGSDRSASSLNHTILAGVHSNDHSVV. Serine 341 is modified (phosphoserine). Phosphothreonine is present on threonine 351.

It belongs to the G-protein coupled receptor 1 family. Interacts with RALA and GRK2. Interacts with GNAQ and GNA13. Interacts with CD14; the interaction is enhanced by exposure to bacterial lipopolysaccharide (LPS). N-glycosylated. In terms of tissue distribution, expressed in many adult organs, including brain, heart, colon, small intestine, placenta, prostate, ovary, pancreas, testes, spleen, skeletal muscle, and kidney. Little or no expression in liver, lung, thymus, or peripheral blood leukocytes. Detected in lung fibroblasts from bronchoalveolar fluid from patients with idiopathic pulmonary fibrosis. Detected in bone marrow-derived mesenchymal stem cells.

The protein resides in the cell surface. The protein localises to the cell membrane. Its subcellular location is the endosome. Its function is as follows. Receptor for lysophosphatidic acid (LPA). Plays a role in the reorganization of the actin cytoskeleton, cell migration, differentiation and proliferation, and thereby contributes to the responses to tissue damage and infectious agents. Activates downstream signaling cascades via the G(i)/G(o), G(12)/G(13), and G(q) families of heteromeric G proteins. Signaling inhibits adenylyl cyclase activity and decreases cellular cAMP levels. Signaling triggers an increase of cytoplasmic Ca(2+) levels. Activates RALA; this leads to the activation of phospholipase C (PLC) and the formation of inositol 1,4,5-trisphosphate. Signaling mediates activation of down-stream MAP kinases. Contributes to the regulation of cell shape. Promotes Rho-dependent reorganization of the actin cytoskeleton in neuronal cells and neurite retraction. Promotes the activation of Rho and the formation of actin stress fibers. Promotes formation of lamellipodia at the leading edge of migrating cells via activation of RAC1. Through its function as LPA receptor, plays a role in chemotaxis and cell migration, including responses to injury and wounding. Plays a role in triggering inflammation in response to bacterial lipopolysaccharide (LPS) via its interaction with CD14. Promotes cell proliferation in response to LPA. Inhibits the intracellular ciliogenesis pathway in response to LPA and through AKT1 activation. Required for normal skeleton development. May play a role in osteoblast differentiation. Required for normal brain development. Required for normal proliferation, survival and maturation of newly formed neurons in the adult dentate gyrus. Plays a role in pain perception and in the initiation of neuropathic pain. The polypeptide is Lysophosphatidic acid receptor 1 (LPAR1) (Homo sapiens (Human)).